The primary structure comprises 376 residues: E3 ubiquitin-protein ligase RNF133 (376 aa).

The PA domain occupies 65-167 (SSTLKRVAGV…LKGTEIFHLI (103 aa)). The helical transmembrane segment at 190–210 (YLVSFVIVTTATLAYFIFYHI) threads the bilayer. An RING-type; atypical zinc finger spans residues 256–297 (CVICFERYKPNDIVRILTCKHFFHKNCIDPWILPHGTCPICK). The interval 327–376 (ETLSPSEEETNNEVSPAGTSDKVIHVEENPTSQNNDIQPHSVVEDVHPSP) is disordered. Over residues 355–364 (NPTSQNNDIQ) the composition is skewed to polar residues.

As to quaternary structure, interacts with E3 ligase UBE2J1. In terms of processing, auto-ubiquitinated. Expression is testis-specific.

The protein resides in the endoplasmic reticulum membrane. It carries out the reaction S-ubiquitinyl-[E2 ubiquitin-conjugating enzyme]-L-cysteine + [acceptor protein]-L-lysine = [E2 ubiquitin-conjugating enzyme]-L-cysteine + N(6)-ubiquitinyl-[acceptor protein]-L-lysine.. It participates in protein modification; protein ubiquitination. In terms of biological role, has E3 ubiquitin-protein ligase activity. Plays a role in male fecundity through the interaction with the E2 ubituitin-protein ligase UBE2J1. The sequence is that of E3 ubiquitin-protein ligase RNF133 from Homo sapiens (Human).